A 218-amino-acid polypeptide reads, in one-letter code: Ribonuclease T (218 aa).

Residues 22 to 196 (VVVDVETAGF…YDAMKTAELF (175 aa)) enclose the Exonuclease domain. The Mg(2+) site is built by Asp-25, Glu-27, His-183, and Asp-188. The Proton donor/acceptor role is filled by His-183.

Belongs to the RNase T family. In terms of assembly, homodimer. It depends on Mg(2+) as a cofactor.

Its function is as follows. Trims short 3' overhangs of a variety of RNA species, leaving a one or two nucleotide 3' overhang. Responsible for the end-turnover of tRNA: specifically removes the terminal AMP residue from uncharged tRNA (tRNA-C-C-A). Also appears to be involved in tRNA biosynthesis. In Hahella chejuensis (strain KCTC 2396), this protein is Ribonuclease T.